A 584-amino-acid polypeptide reads, in one-letter code: FAD-linked oxidoreductase OXR2 (584 aa).

The signal sequence occupies residues 1-22 (MRSIISAFILSLNFCTQPLVRG). Residues asparagine 75, asparagine 97, asparagine 115, asparagine 225, asparagine 302, asparagine 321, and asparagine 507 are each glycosylated (N-linked (GlcNAc...) asparagine). The region spanning 128–310 (LGMLSEKYIA…LNATFKVEPV (183 aa)) is the FAD-binding PCMH-type domain.

This sequence belongs to the oxygen-dependent FAD-linked oxidoreductase family. FAD is required as a cofactor.

It participates in secondary metabolite biosynthesis. In terms of biological role, FAD-linked oxidoreductase; part of the gene cluster that mediates the biosynthesis of a tyrosine-derived cytochalasan acting as a fungal signal recognized by resistant rice plants and leads to avirulence in Pi33 resistant rice cultivars. The first step in the pathway is catalyzed by the hybrid PKS-NRPS ACE1, assisted by the enoyl reductase RAP1, that are responsible for fusion of the tyrosine precursor and the polyketide backbone. The polyketide synthase module (PKS) of ACE1 is responsible for the synthesis of the polyketide backbone and the downstream nonribosomal peptide synthetase (NRPS) amidates the carboxyl end of the polyketide with the tyrosine precursor. Because ACE1 lacks a designated enoylreductase (ER) domain, the required activity is provided the enoyl reductase RAP1. Reduction by the hydrolyase ORFZ, followed by dehydration and intra-molecular Diels-Alder cyclization by the Diels-Alderase ORF3 then yield the required isoindolone-fused macrocycle. A number of oxidative steps catalyzed by the tailoring enzymes identified within the cluster, including cytochrome P450 monooxygenases CYP1 to CYP4, the FAD-linked oxidoreductase OXR2 and the short-chain dehydrogenase/reductase OXR1, are further required to afford the final cytochalasans that confer avirulence and which have still to be identified. The monooxygenase CYP1 has been shown to be a site-selective C-18 hydroxylase whereas the function of CYP3 is the site-selective epoxidation of the C-6/C-7 olefin that is present in some intermediate compounds. Finally, SYN2 and RAP2 are not required for avirulence in Pi33 resistant rice cultivars. The chain is FAD-linked oxidoreductase OXR2 from Pyricularia oryzae (strain 70-15 / ATCC MYA-4617 / FGSC 8958) (Rice blast fungus).